A 157-amino-acid polypeptide reads, in one-letter code: AP-1 complex subunit sigma-2 (157 aa).

It belongs to the adaptor complexes small subunit family. In terms of assembly, adaptor protein complex 1 (AP-1) is a heterotetramer composed of two large adaptins (gamma-type subunit AP1G1 and beta-type subunit AP1B1), a medium adaptin (mu-type subunit AP1M1 or AP1M2) and a small adaptin (sigma-type subunit AP1S1 or AP1S2 or AP1S3). Binds to MUC1. Widely expressed.

Its subcellular location is the golgi apparatus. It is found in the cytoplasmic vesicle membrane. The protein resides in the membrane. The protein localises to the clathrin-coated pit. Functionally, subunit of clathrin-associated adaptor protein complex 1 that plays a role in protein sorting in the late-Golgi/trans-Golgi network (TGN) and/or endosomes. The AP complexes mediate both the recruitment of clathrin to membranes and the recognition of sorting signals within the cytosolic tails of transmembrane cargo molecules. The polypeptide is AP-1 complex subunit sigma-2 (AP1S2) (Homo sapiens (Human)).